A 281-amino-acid chain; its full sequence is Merozoite surface protein 1 (281 aa).

A signal peptide spans 1–19 (MKIIFFLCSFLFFIINTQC). Low complexity predominate over residues 63–100 (ASAQSGASAQSGASAQSGASAQSGTSGPSGPSGTSPSS). The segment at 63–126 (ASAQSGASAQ…PADASDSDAK (64 aa)) is disordered. Residues 101-110 (RSNTLPRSNT) are compositionally biased toward polar residues. The N-linked (GlcNAc...) asparagine glycan is linked to Asn109. Over residues 111 to 120 (SSGASPPADA) the composition is skewed to low complexity. N-linked (GlcNAc...) asparagine glycosylation is present at Asn248.

Forms a complex composed of subunits p83, p30, p38, and p42 which remain non-covalently associated; the complex is formed at the merozoite surface prior to egress from host erythrocytes. Forms a complex composed of processed MSP1 subunits, MSP6 subunit p36 and MSP7; the complex is formed at the merozoite surface prior to egress from host erythrocytes. Within the complex, interacts (via subunit p38) with MSP6 subunit p36 and (via subunits p83, p30 and p38) with MSP7 (via subunit p22). Forms a complex composed of MSP1, MSP6, DBLMSP1 and DBLMSP2. Within the complex, interacts (via subunit p38) with DBLMSP1 and DBLMSP2. Forms a complex composed of MSP1, and rhoptry proteins RhopH3, RAP1 and CLAG9/RhopH3. Within the complex, interacts (via subunits p42 and p19) with RhopH3 (via C-terminus). Forms a complex composed of MSP1, MSP6, MSP7, MSP9 and MSP3; within the complex, MSP6 and MSP9 mediate the binding to the host erythrocyte. Interacts (via subunits p19 and p42) with MSP9; the interaction is direct; MSP1 subunits p19 or p42, and MSP9 form a co-ligand complex that interacts with host SLC4A1/Band 3 protein. May interact with PFD6. Interacts with host spectrin. Post-translationally, the p190 precursor is cleaved by SUB1 prior to merozoite egress into 4 subunits p83, p30, p38, and p42 which remain non-covalently associated. SUB1-mediated proteolytic cleavage occurs in an orderly manner; the first cleavage occurs at the p30/p38 site, followed by cleavage at the p83/p30 site, the last cleavage occurs at the p38/p42 site. The order of cleavage is essential for parasite viability. SUB1-mediated processing is essential for merozoite egress. In a second processing step during erythrocyte invasion, p42 is cleaved by SUB2 into p33 and p19; the latter remains attached to the merozoite surface via its GPI-anchor and is endocytosed during the subsequent ring stage.

It is found in the cell membrane. Its subcellular location is the secreted. Functionally, during the asexual blood stage, involved in merozoite egress from host erythrocytes possibly via its interaction with the host cytoskeleton protein spectrin resulting in the destabilization of the host cytoskeleton and thus leading to erythrocyte cell membrane rupture. Involved in the binding to host erythrocytes and is required for host erythrocyte invasion. This Plasmodium falciparum (isolate NF7 / Ghana) protein is Merozoite surface protein 1.